The following is a 911-amino-acid chain: Alpha-actinin-4 (911 aa).

An actin-binding region spans residues 1–269 (MVDYHAANQS…YVSSFYHAFS (269 aa)). Residues 8–31 (NQSYQYGPSSGSNGAGGGGTMGDY) form a disordered region. The interval 12–26 (QYGPSSGSNGAGGGG) is interaction with VCL. Y31 is modified (phosphotyrosine). Residues 40-61 (RDLLLDPAWEKQQRKTFTAWCN) form an interaction with VCL region. Calponin-homology (CH) domains are found at residues 50–154 (KQQR…LRFA) and 163–269 (TSAK…HAFS). The LXXLL motif motif lies at 84–88 (LMLLL). The tract at residues 108–126 (KINNVNKALDFIASKGVKL) is interaction with VCL. The residue at position 114 (K114) is an N6-acetyllysine. The interval 177–192 (TAPYKNVNVQNFHISW) is polyphosphoinositide (PIP2)-binding. Residue K214 is modified to N6-acetyllysine. T249 carries the post-translational modification Phosphothreonine. Spectrin repeat units follow at residues 293-403 (HLME…WLLN), 413-518 (HLAE…ALEK), 528-639 (QLHL…ALLE), and 649-752 (HLRR…EVEN). K592 and K625 each carry N6-acetyllysine. Residue S696 is modified to Phosphoserine. Residues 736–911 (WEQLLTTIAR…STALYGESDL (176 aa)) form a mediates interaction with MICALL2 region. EF-hand domains lie at 765 to 800 (EQMQEFRASFNHFDKDHGGALGPEEFKACLISLGYD) and 806 to 841 (QGDAEFNRIMSVVDPNHSGLVTFQAFIDFMSRETTD). D778 serves as a coordination point for Ca(2+). Residue K779 is modified to N6-acetyllysine. Ca(2+) is bound by residues D780 and E789. K859 bears the N6-acetyllysine mark. Residue S909 is modified to Phosphoserine.

This sequence belongs to the alpha-actinin family. In terms of assembly, homodimer; antiparallel. Identified in a IGF2BP1-dependent mRNP granule complex containing untranslated mRNAs. Component of the CART complex, at least composed of ACTN4, HGS/HRS, MYO5B and TRIM3. Binds TRIM3 at the N-terminus. Interacts with MAGI1. Interacts with PDLIM2. Identified in a complex with CASK, IQGAP1, MAGI2, NPHS1, SPTAN1 and SPTBN1. Interacts with MICALL2 (preferentially in opened conformation); stimulated by RAB13 activation. Interacts with PPARG and RARA. Binds to VCL; this interaction triggers VCL conformational changes. Interacts with SEPTIN14. Interacts with IGSF8.

It localises to the nucleus. It is found in the cytoplasm. The protein localises to the cell junction. The protein resides in the cytoskeleton. Its subcellular location is the stress fiber. It localises to the perinuclear region. Functionally, F-actin cross-linking protein which is thought to anchor actin to a variety of intracellular structures. This is a bundling protein. Probably involved in vesicular trafficking via its association with the CART complex. The CART complex is necessary for efficient transferrin receptor recycling but not for EGFR degradation. Involved in tight junction assembly in epithelial cells probably through interaction with MICALL2. Links MICALL2 to the actin cytoskeleton and recruits it to the tight junctions. May also function as a transcriptional coactivator, stimulating transcription mediated by the nuclear hormone receptors PPARG and RARA. Association with IGSF8 regulates the immune synapse formation and is required for efficient T-cell activation. This Bos taurus (Bovine) protein is Alpha-actinin-4.